We begin with the raw amino-acid sequence, 319 residues long: Mitochondrial fission regulator 1-like (319 aa).

The tract at residues 1 to 35 (MASLGAGAEPESVLFGKDGTEACESPEGRRSGRRK) is disordered.

This sequence belongs to the MTFR1 family.

It is found in the mitochondrion outer membrane. Its function is as follows. Mitochondrial protein required for adaptation of miochondrial dynamics to metabolic changes. Regulates mitochondrial morphology at steady state and mediates AMPK-dependent stress-induced mitochondrial fragmentation via the control of OPA1 levels. This is Mitochondrial fission regulator 1-like (mtfr1l) from Xenopus tropicalis (Western clawed frog).